The sequence spans 186 residues: Transcription factor FapR (186 aa).

The protein belongs to the FapR family.

In terms of biological role, transcriptional factor involved in regulation of membrane lipid biosynthesis by repressing genes involved in fatty acid and phospholipid metabolism. The sequence is that of Transcription factor FapR from Halalkalibacterium halodurans (strain ATCC BAA-125 / DSM 18197 / FERM 7344 / JCM 9153 / C-125) (Bacillus halodurans).